A 305-amino-acid chain; its full sequence is Translation initiation factor eIF2B subunit alpha (305 aa).

N6-acetyllysine is present on lysine 35.

This sequence belongs to the eIF-2B alpha/beta/delta subunits family. As to quaternary structure, component of the translation initiation factor 2B (eIF2B) complex which is a heterodecamer of two sets of five different subunits: alpha, beta, gamma, delta and epsilon. Subunits alpha, beta and delta comprise a regulatory subcomplex and subunits epsilon and gamma comprise a catalytic subcomplex. Within the complex, the hexameric regulatory complex resides at the center, with the two heterodimeric catalytic subcomplexes bound on opposite sides.

The protein localises to the cytoplasm. It localises to the cytosol. With respect to regulation, activated by the chemical integrated stress response (ISR) inhibitor ISRIB which stimulates guanine nucleotide exchange factor activity for both phosphorylated and unphosphorylated eIF2. In terms of biological role, acts as a component of the translation initiation factor 2B (eIF2B) complex, which catalyzes the exchange of GDP for GTP on eukaryotic initiation factor 2 (eIF2) gamma subunit. Its guanine nucleotide exchange factor activity is repressed when bound to eIF2 complex phosphorylated on the alpha subunit, thereby limiting the amount of methionyl-initiator methionine tRNA available to the ribosome and consequently global translation is repressed. The chain is Translation initiation factor eIF2B subunit alpha (EIF2B1) from Macaca fascicularis (Crab-eating macaque).